The following is a 230-amino-acid chain: MTKEVPYYCDNDDNNIIRLFIIRHGQTEHNVKKILQGHKDTSINPTGEEQATKLGHYLRSRGIHFDKVVSSDLKRCRQTTALVLKHSKQENVPTSYTSGLRERYMGVIEGMQITEAEKYADKHGEGSFRNFGEKSDDFVARLTGCVEEEVAEASNEGVKNLALVSHGGAIRMILQWLKYENHQAHKIIVFNTSVTIVDYVKDSKQFIVRRVGNTQHLGDGEFVVSDLRLR.

His-24 acts as the Tele-phosphohistidine intermediate in catalysis. Substrate-binding positions include 36 to 37 and 102 to 105; these read QG and ERYM. Glu-102 functions as the Proton donor/acceptor in the catalytic mechanism.

It belongs to the phosphoglycerate mutase family. BPG-dependent PGAM subfamily.

The protein localises to the cytoplasm. It localises to the nucleus. In terms of biological role, metal-independent phosphatase active against a broad range of phosphorylated substrates including nucleoside tri- and diphosphates, phosphorylated organic acids, and amino acids. Shows no activity against phytic acid, phosphorylated carbohydrates, and nucleoside monophosphates. In Saccharomyces cerevisiae (strain ATCC 204508 / S288c) (Baker's yeast), this protein is Broad-specificity phosphatase YOR283W.